We begin with the raw amino-acid sequence, 417 residues long: 4-hydroxy-3-methylbut-2-en-1-yl diphosphate synthase (flavodoxin) (417 aa).

Residues cysteine 307, cysteine 310, cysteine 353, and glutamate 360 each coordinate [4Fe-4S] cluster.

Belongs to the IspG family. The cofactor is [4Fe-4S] cluster.

The catalysed reaction is (2E)-4-hydroxy-3-methylbut-2-enyl diphosphate + oxidized [flavodoxin] + H2O + 2 H(+) = 2-C-methyl-D-erythritol 2,4-cyclic diphosphate + reduced [flavodoxin]. It functions in the pathway isoprenoid biosynthesis; isopentenyl diphosphate biosynthesis via DXP pathway; isopentenyl diphosphate from 1-deoxy-D-xylulose 5-phosphate: step 5/6. Its function is as follows. Converts 2C-methyl-D-erythritol 2,4-cyclodiphosphate (ME-2,4cPP) into 1-hydroxy-2-methyl-2-(E)-butenyl 4-diphosphate. This Xylella fastidiosa (strain 9a5c) protein is 4-hydroxy-3-methylbut-2-en-1-yl diphosphate synthase (flavodoxin).